A 183-amino-acid chain; its full sequence is ATP synthase subunit delta (183 aa).

This sequence belongs to the ATPase delta chain family. F-type ATPases have 2 components, F(1) - the catalytic core - and F(0) - the membrane proton channel. F(1) has five subunits: alpha(3), beta(3), gamma(1), delta(1), epsilon(1). F(0) has three main subunits: a(1), b(2) and c(10-14). The alpha and beta chains form an alternating ring which encloses part of the gamma chain. F(1) is attached to F(0) by a central stalk formed by the gamma and epsilon chains, while a peripheral stalk is formed by the delta and b chains.

It localises to the cell inner membrane. F(1)F(0) ATP synthase produces ATP from ADP in the presence of a proton or sodium gradient. F-type ATPases consist of two structural domains, F(1) containing the extramembraneous catalytic core and F(0) containing the membrane proton channel, linked together by a central stalk and a peripheral stalk. During catalysis, ATP synthesis in the catalytic domain of F(1) is coupled via a rotary mechanism of the central stalk subunits to proton translocation. Functionally, this protein is part of the stalk that links CF(0) to CF(1). It either transmits conformational changes from CF(0) to CF(1) or is implicated in proton conduction. The sequence is that of ATP synthase subunit delta from Ehrlichia canis (strain Jake).